Here is a 159-residue protein sequence, read N- to C-terminus: Putative ribosomal RNA large subunit methyltransferase H (159 aa).

S-adenosyl-L-methionine is bound by residues Leu-76, Gly-108, and 127–132 (FSKMTF).

Belongs to the RNA methyltransferase RlmH family.

It localises to the cytoplasm. It catalyses the reaction pseudouridine(1915) in 23S rRNA + S-adenosyl-L-methionine = N(3)-methylpseudouridine(1915) in 23S rRNA + S-adenosyl-L-homocysteine + H(+). In terms of biological role, specifically methylates the pseudouridine at position 1915 (m3Psi1915) in 23S rRNA. The chain is Putative ribosomal RNA large subunit methyltransferase H from Methanococcus maripaludis (strain C6 / ATCC BAA-1332).